The primary structure comprises 370 residues: Phospho-N-acetylmuramoyl-pentapeptide-transferase (370 aa).

A run of 11 helical transmembrane segments spans residues 21–41 (PTSI…DLFI), 46–66 (LLVP…WGII), 92–112 (PSMG…LFAL), 117–137 (FSKQ…IGLI), 151–171 (LSVK…LVLI), 181–201 (ILIF…IALF), 217–237 (DGLA…ELII), 243–263 (NYAI…FLIF), 270–290 (VFMG…VALL), 298–318 (LIMG…VGVF), and 349–369 (TIIV…AIML).

Belongs to the glycosyltransferase 4 family. MraY subfamily. It depends on Mg(2+) as a cofactor.

It localises to the cell inner membrane. The enzyme catalyses UDP-N-acetyl-alpha-D-muramoyl-L-alanyl-gamma-D-glutamyl-meso-2,6-diaminopimeloyl-D-alanyl-D-alanine + di-trans,octa-cis-undecaprenyl phosphate = di-trans,octa-cis-undecaprenyl diphospho-N-acetyl-alpha-D-muramoyl-L-alanyl-D-glutamyl-meso-2,6-diaminopimeloyl-D-alanyl-D-alanine + UMP. It participates in cell wall biogenesis; peptidoglycan biosynthesis. Functionally, catalyzes the initial step of the lipid cycle reactions in the biosynthesis of the cell wall peptidoglycan: transfers peptidoglycan precursor phospho-MurNAc-pentapeptide from UDP-MurNAc-pentapeptide onto the lipid carrier undecaprenyl phosphate, yielding undecaprenyl-pyrophosphoryl-MurNAc-pentapeptide, known as lipid I. The protein is Phospho-N-acetylmuramoyl-pentapeptide-transferase of Prochlorococcus marinus (strain SARG / CCMP1375 / SS120).